A 182-amino-acid chain; its full sequence is ATP synthase subunit b (182 aa).

A helical transmembrane segment spans residues 25 to 45; the sequence is VVLAGFAVLFYIVVKFVVPMF.

The protein belongs to the ATPase B chain family. F-type ATPases have 2 components, F(1) - the catalytic core - and F(0) - the membrane proton channel. F(1) has five subunits: alpha(3), beta(3), gamma(1), delta(1), epsilon(1). F(0) has three main subunits: a(1), b(2) and c(10-14). The alpha and beta chains form an alternating ring which encloses part of the gamma chain. F(1) is attached to F(0) by a central stalk formed by the gamma and epsilon chains, while a peripheral stalk is formed by the delta and b chains.

It is found in the cell membrane. Its function is as follows. F(1)F(0) ATP synthase produces ATP from ADP in the presence of a proton or sodium gradient. F-type ATPases consist of two structural domains, F(1) containing the extramembraneous catalytic core and F(0) containing the membrane proton channel, linked together by a central stalk and a peripheral stalk. During catalysis, ATP synthesis in the catalytic domain of F(1) is coupled via a rotary mechanism of the central stalk subunits to proton translocation. Component of the F(0) channel, it forms part of the peripheral stalk, linking F(1) to F(0). The chain is ATP synthase subunit b from Arthrobacter sp. (strain FB24).